The following is a 534-amino-acid chain: (E)-beta-farnesene synthase (534 aa).

Positions 287, 291, 431, 435, and 439 each coordinate Mg(2+). The DDXXD motif motif lies at 287-291; sequence DDMMD.

This sequence belongs to the terpene synthase family. Requires Mg(2+) as cofactor. Co(2+) serves as cofactor. It depends on Mn(2+) as a cofactor.

The protein resides in the cytoplasm. It carries out the reaction (2E,6E)-farnesyl diphosphate = (E)-beta-farnesene + diphosphate. Its pathway is secondary metabolite biosynthesis; terpenoid biosynthesis. Functionally, sesquiterpene cyclase catalyzing the production of beta-farnesene and alpha-bergamotene in equal amounts from farnesyl diphosphate. Involved in indirect defense by producing volatile signals attracting natural enemies of herbivores. In Zea mays subsp. mexicana (Mexican teosinte), this protein is (E)-beta-farnesene synthase.